An 842-amino-acid polypeptide reads, in one-letter code: Oleate activated transcription factor 3 (842 aa).

The segment at residues 22–50 (CTNCKRRKSKCDRQNPCSNCVRFGNKDTC) is a DNA-binding region (zn(2)-C6 fungal-type). The tract at residues 55–101 (NPKNTESQHGEDTDNKVKKQQPQMIKGKRNGTSSSIVGSKASSISPT) is disordered. Residues 60–71 (ESQHGEDTDNKV) show a composition bias toward basic and acidic residues. The segment covering 87–99 (SSSIVGSKASSIS) has biased composition (low complexity).

Belongs to the OAF3 family.

It localises to the cytoplasm. Its subcellular location is the nucleus. The protein localises to the mitochondrion. Functionally, transcriptional inhibitor with a significantly increased number of target genes in response to oleate. The chain is Oleate activated transcription factor 3 (OAF3) from Zygosaccharomyces rouxii (strain ATCC 2623 / CBS 732 / NBRC 1130 / NCYC 568 / NRRL Y-229).